We begin with the raw amino-acid sequence, 526 residues long: Protein mono-ADP-ribosyltransferase PARP3 (526 aa).

The interval 1-55 (MAPKRRAPPASQPADGGKKAKGGQEEEEDAWSSALNALKTAPREKPPATIDGQCP) is disordered. Residues 61 to 151 (DAKVYEDYDC…DNFVAQPGKY (91 aa)) form the WGR domain. The 119-residue stretch at 183 to 301 (PCALDETTQK…DIEVAQSLQA (119 aa)) folds into the PARP alpha-helical domain. The PARP catalytic domain occupies 312–526 (HPLDRDYALL…RIRYLVQLHF (215 aa)).

Belongs to the ARTD/PARP family.

The protein resides in the nucleus. It is found in the chromosome. The protein localises to the cytoplasm. It localises to the cytoskeleton. Its subcellular location is the microtubule organizing center. The protein resides in the centrosome. It is found in the centriole. It carries out the reaction L-aspartyl-[protein] + NAD(+) = 4-O-(ADP-D-ribosyl)-L-aspartyl-[protein] + nicotinamide. The enzyme catalyses L-glutamyl-[protein] + NAD(+) = 5-O-(ADP-D-ribosyl)-L-glutamyl-[protein] + nicotinamide. It catalyses the reaction L-lysyl-[protein] + NAD(+) = N(6)-(ADP-D-ribosyl)-L-lysyl-[protein] + nicotinamide + H(+). Mono-ADP-ribosyltransferase that mediates mono-ADP-ribosylation of target proteins and plays a key role in the response to DNA damage. Mediates mono-ADP-ribosylation of glutamate, aspartate or lysine residues on target proteins. In contrast to PARP1 and PARP2, it is not able to mediate poly-ADP-ribosylation. Involved in DNA repair by mediating mono-ADP-ribosylation of a limited number of acceptor proteins involved in chromatin architecture and in DNA metabolism, such as histone H2B, XRCC5 and XRCC6. ADP-ribosylation follows DNA damage and appears as an obligatory step in a detection/signaling pathway leading to the reparation of DNA strand breaks. Involved in single-strand break repair by catalyzing mono-ADP-ribosylation of histone H2B on 'Glu-2' (H2BE2ADPr) of nucleosomes containing nicked DNA. Cooperates with the XRCC5-XRCC6 (Ku80-Ku70) heterodimer to limit end-resection thereby promoting accurate NHEJ. Associates with a number of DNA repair factors and is involved in the response to exogenous and endogenous DNA strand breaks. Together with APLF, promotes the retention of the LIG4-XRCC4 complex on chromatin and accelerate DNA ligation during non-homologous end-joining (NHEJ). In addition to proteins, also able to ADP-ribosylate DNA: mediates DNA mono-ADP-ribosylation of DNA strand break termini via covalent addition of a single ADP-ribose moiety to a 5'- or 3'-terminal phosphate residues in DNA containing multiple strand breaks. The protein is Protein mono-ADP-ribosyltransferase PARP3 of Gallus gallus (Chicken).